Reading from the N-terminus, the 218-residue chain is Flagellar calcium-binding protein TB-24 (218 aa).

The disordered stretch occupies residues 1–27 (MGCSASKDTTNSKDGAASKGGKDGKTT). 4 consecutive EF-hand domains span residues 48 to 83 (ESKS…ILKL), 84 to 119 (DEFT…LVEF), 130 to 165 (YDIF…LKEW), and 167 to 202 (VDIT…KKLQ). Ca(2+) is bound by residues Asp61, Asn63, Thr65, Lys67, and Glu72. Residues Asp143, Asp145, Ser147, Glu154, Asp180, Asn182, Ser184, and Glu191 each contribute to the Ca(2+) site.

It belongs to the calflagin family.

Its subcellular location is the cell projection. The protein resides in the cilium. The protein localises to the flagellum. Functionally, may contribute to the rapid motility of the trypanosomes, playing a role either in flagellar structure or in calcium metabolism. Could alternate between a GDP-bound inactive form to a calcium/GTP-bound active form. The chain is Flagellar calcium-binding protein TB-24 from Trypanosoma brucei brucei.